Reading from the N-terminus, the 487-residue chain is Protein nucleotidyltransferase YdiU (487 aa).

Positions 92, 95, 106, 118, 119, 169, and 176 each coordinate ATP. The active-site Proton acceptor is Asp253. Residues Asn254 and Asp263 each coordinate Mg(2+). Asp263 serves as a coordination point for ATP.

This sequence belongs to the SELO family. Requires Mg(2+) as cofactor. It depends on Mn(2+) as a cofactor.

The enzyme catalyses L-seryl-[protein] + ATP = 3-O-(5'-adenylyl)-L-seryl-[protein] + diphosphate. The catalysed reaction is L-threonyl-[protein] + ATP = 3-O-(5'-adenylyl)-L-threonyl-[protein] + diphosphate. It carries out the reaction L-tyrosyl-[protein] + ATP = O-(5'-adenylyl)-L-tyrosyl-[protein] + diphosphate. It catalyses the reaction L-histidyl-[protein] + UTP = N(tele)-(5'-uridylyl)-L-histidyl-[protein] + diphosphate. The enzyme catalyses L-seryl-[protein] + UTP = O-(5'-uridylyl)-L-seryl-[protein] + diphosphate. The catalysed reaction is L-tyrosyl-[protein] + UTP = O-(5'-uridylyl)-L-tyrosyl-[protein] + diphosphate. Its function is as follows. Nucleotidyltransferase involved in the post-translational modification of proteins. It can catalyze the addition of adenosine monophosphate (AMP) or uridine monophosphate (UMP) to a protein, resulting in modifications known as AMPylation and UMPylation. This chain is Protein nucleotidyltransferase YdiU, found in Bordetella pertussis (strain Tohama I / ATCC BAA-589 / NCTC 13251).